Consider the following 545-residue polypeptide: Monocarboxylate transporter 8 (545 aa).

The tract at residues 1 to 98 is disordered; the sequence is MALPSPASEE…VETRGTARGF (98 aa). Residue alanine 2 is modified to N-acetylalanine. Residues 2-102 are Cytoplasmic-facing; sequence ALPSPASEEA…GTARGFQPPE (101 aa). A run of 2 repeats spans residues 29 to 50 and 51 to 72. The 2 X 22 AA approximate tandem repeats stretch occupies residues 29–72; that stretch reads PVPEPEPEPEPEPEPDPEPVPVPPPEPQPEPEPQPLPDPAPLPE. Over residues 33 to 45 the composition is skewed to acidic residues; sequence PEPEPEPEPEPDP. Over residues 46–70 the composition is skewed to pro residues; sequence EPVPVPPPEPQPEPEPQPLPDPAPL. The chain crosses the membrane as a helical span at residues 103-123; sequence GGFGWIVVFAATWCNGSIFGI. Residues 124 to 149 lie on the Extracellular side of the membrane; it reads HNSVGILYSMLLEEEKEKNRQVEFQA. The chain crosses the membrane as a helical span at residues 150 to 170; that stretch reads AWVGALAMGMIFFCSPIVSIF. The Cytoplasmic segment spans residues 171 to 177; the sequence is TDRLGCR. A helical transmembrane segment spans residues 178–198; that stretch reads ITATTGAAVAFIGLHTSSFTS. At 199-206 the chain is on the extracellular side; sequence SLSLRYFT. The helical transmembrane segment at 207–227 threads the bilayer; the sequence is YGILFGCGCSFAFQPSLVILG. The Cytoplasmic segment spans residues 228-235; the sequence is HYFQRRLG. Residues 236 to 256 form a helical membrane-spanning segment; that stretch reads LANGVVSAGSSIFSMSFPFLI. Residues 257 to 264 are Extracellular-facing; sequence KMLGDKIK. A helical transmembrane segment spans residues 265-285; it reads LAQTFQVLSTFMFVLTLLSLT. The Cytoplasmic portion of the chain corresponds to 286–328; sequence YRPLLPSSQDTPSKRGAHTLRQRFLVQFRKYFNMRVFRQRTYR. Residues 329–349 traverse the membrane as a helical segment; that stretch reads IWAFGIAAAALGYFVPYVHLM. Residues 350-362 are Extracellular-facing; sequence KYVEDKFKEIKET. Residues 363 to 383 form a helical membrane-spanning segment; the sequence is WVLLVCIGATSGLGRLVSGHI. Residues 384-392 are Cytoplasmic-facing; the sequence is SDSIPGLKK. The chain crosses the membrane as a helical span at residues 393-413; sequence IYLQVLSFLLLGLMSMMIPLC. Residues 414–415 are Extracellular-facing; the sequence is RD. A helical membrane pass occupies residues 416–436; that stretch reads FGGLIVVCLFLGLCDGFFITI. At 437–453 the chain is on the cytoplasmic side; that stretch reads MAPIAFELVGPMQASQA. Residues 454–474 form a helical membrane-spanning segment; sequence IGYLLGMMALPMIAGPPIAGL. The Extracellular segment spans residues 475-483; sequence LRNCFGDYH. Residues 484-504 traverse the membrane as a helical segment; it reads VAFYFAGVPPIIGAVILFFVP. Residues 505–545 lie on the Cytoplasmic side of the membrane; the sequence is LMHQRMFKKEQRDSSKDKMLSHDPDPNGELLPGSPTPEEPI. Over residues 514-529 the composition is skewed to basic and acidic residues; it reads EQRDSSKDKMLSHDPD. Residues 514–545 are disordered; sequence EQRDSSKDKMLSHDPDPNGELLPGSPTPEEPI. Threonine 540 carries the phosphothreonine modification.

The protein belongs to the major facilitator superfamily. Monocarboxylate porter (TC 2.A.1.13) family. As to quaternary structure, monomer. Homodimer. Homooligomer. Expressed in cerebral microvessels.

It localises to the cell membrane. The protein resides in the apical cell membrane. The catalysed reaction is 3,3',5-triiodo-L-thyronine(out) = 3,3',5-triiodo-L-thyronine(in). It carries out the reaction 3,3',5'-triiodo-L-thyronine(out) = 3,3',5'-triiodo-L-thyronine(in). It catalyses the reaction L-thyroxine(out) = L-thyroxine(in). The enzyme catalyses 3,3'-diiodo-L-thyronine(out) = 3,3'-diiodo-L-thyronine(in). Specific thyroid hormone transmembrane transporter, that mediates both uptake and efflux of thyroid hormones across the cell membrane independently of pH or a Na(+) gradient. Major substrates are the iodothyronines T3 and T4 and to a lesser extent rT3 and 3,3-diiodothyronine (3,3'-T2). Acts as an important mediator of thyroid hormone transport, especially T3, through the blood-brain barrier. This chain is Monocarboxylate transporter 8 (Slc16a2), found in Mus musculus (Mouse).